Reading from the N-terminus, the 428-residue chain is UPF0229 protein YeaH (428 aa).

Residues 78-90 (GNDHFIQNDRIER) show a composition bias toward basic and acidic residues. The segment at 78-111 (GNDHFIQNDRIERPQGGGGGGSGSGQGQASQDGE) is disordered. Gly residues predominate over residues 92–103 (QGGGGGGSGSGQ).

The protein belongs to the UPF0229 family.

The protein is UPF0229 protein YeaH of Salmonella heidelberg (strain SL476).